The sequence spans 782 residues: General transcription and DNA repair factor IIH helicase/translocase subunit XPB (782 aa).

Basic and acidic residues predominate over residues 1–11; that stretch reads MGKRDRVDRDK. A disordered region spans residues 1-52; sequence MGKRDRVDRDKKKSKKRQYEEEEEDEDDAPGNESQEAVPSAAGKQVDESSTK. The Nuclear localization signal motif lies at 6-18; it reads RVDRDKKKSKKRQ. A compositionally biased stretch (acidic residues) spans 20-30; sequence EEEEEDEDDAP. Ser34 carries the post-translational modification Phosphoserine. The 162-residue stretch at 328–489 folds into the Helicase ATP-binding domain; it reads FGNGRARSGV…LNFLIGPKLY (162 aa). Residue 341 to 348 coordinates ATP; it reads PCGAGKSL. The short motif at 442–445 is the DEVH box element; sequence EVHT. A Helicase C-terminal domain is found at 543–703; sequence ACQFLIKFHE…AGMEEEELAF (161 aa). Ser686 carries the post-translational modification Phosphoserine. At Ser751 the chain carries Phosphoserine; by CK2.

The protein belongs to the helicase family. RAD25/XPB subfamily. Component of the 7-subunit TFIIH core complex composed of XPB/ERCC3, XPD/ERCC2, GTF2H1, GTF2H2, GTF2H3, GTF2H4 and GTF2H5, which is active in NER. The core complex associates with the 3-subunit CDK-activating kinase (CAK) module composed of CCNH/cyclin H, CDK7 and MNAT1 to form the 10-subunit holoenzyme (holo-TFIIH) active in transcription. Interacts with PUF60. Interacts with ATF7IP. Interacts with KAT2A; leading to KAT2A recruitment to promoters and acetylation of histones. Part of TBP-based Pol II pre-initiation complex (PIC), in which Pol II core assembles with general transcription factors and other specific initiation factors including GTF2E1, GTF2E2, GTF2F1, GTF2F2, TCEA1, ERCC2, ERCC3, GTF2H2, GTF2H3, GTF2H4, GTF2H5, GTF2A1, GTF2A2, GTF2B and TBP; this large multi-subunit PIC complex mediates DNA unwinding and targets Pol II core to the transcription start site where the first phosphodiester bond forms. Phosphorylation on Ser-751 by CK2 controls the 5'-excision activity of ERCC1-XPF endonuclease; phosphorylated protein inhibits the excision activity and thus NER. Dephosphorylation reactivates the 5'-excision step. Phosphorylation has no effect on transcription or the 3'-5' helicase activity.

The protein resides in the nucleus. It carries out the reaction Couples ATP hydrolysis with the unwinding of duplex DNA by translocating in the 3'-5' direction.. The catalysed reaction is ATP + H2O = ADP + phosphate + H(+). Its activity is regulated as follows. Phosphorylation on Ser-751 by CK2 controls the 5'-excision activity of ERCC1-XPF endonuclease; phosphorylated protein inhibits the excision activity and thus NER. ATPase activity is stimulated by TFIIH subunit p52 (GTF2H4). DNA translocase activity by this subunit in TFIIH is stimulated by XPA, ERCC5/XPG and XFP plus ERCC1. Functionally, ATP-dependent 3'-5' DNA helicase/translocase; binds dsDNA rather than ssDNA, unzipping it in a translocase rather than classical helicase activity. Component of the general transcription and DNA repair factor IIH (TFIIH) core complex. When complexed to CDK-activating kinase (CAK), involved in RNA transcription by RNA polymerase II. The ATPase activity of XPB/ERCC3, but not its helicase activity, is required for DNA opening; it may wrap around the damaged DNA wedging it open, causing localized melting and twisting that allows XPD/ERCC2 helicase to anchor. The ATP-dependent helicase activity of XPB/ERCC3 may be required for promoter escape. Also involved in transcription-coupled nucleotide excision repair (NER) of damaged DNA. In NER, TFIIH acts by opening DNA around the lesion to allow the excision of the damaged oligonucleotide and its replacement by a new DNA fragment. The structure of the TFIIH transcription complex differs from the NER-TFIIH complex; large movements by XPD/ERCC2 and XPB/ERCC3 are stabilized by XPA. The protein is General transcription and DNA repair factor IIH helicase/translocase subunit XPB (Ercc3) of Rattus norvegicus (Rat).